The sequence spans 159 residues: Urease subunit beta 2 (159 aa).

Positions 1 to 23 (MAKEPTEAAHPQPEQTKTNHKAH) are disordered.

This sequence belongs to the urease beta subunit family. As to quaternary structure, heterotrimer of UreA (gamma), UreB (beta) and UreC (alpha) subunits. Three heterotrimers associate to form the active enzyme.

Its subcellular location is the cytoplasm. The enzyme catalyses urea + 2 H2O + H(+) = hydrogencarbonate + 2 NH4(+). The protein operates within nitrogen metabolism; urea degradation; CO(2) and NH(3) from urea (urease route): step 1/1. The sequence is that of Urease subunit beta 2 from Brucella abortus biovar 1 (strain 9-941).